The chain runs to 249 residues: Proteasome activator complex subunit 1 (249 aa).

Residues 60–102 form a disordered region; it reads PLDIPVPDPVKEKEKEERKKQQEKEDKDEKKKGEDEDKGPPCG. Residues 68 to 98 are compositionally biased toward basic and acidic residues; that stretch reads PVKEKEKEERKKQQEKEDKDEKKKGEDEDKG.

Belongs to the PA28 family. As to quaternary structure, heterodimer of PSME1 and PSME2, which forms a hexameric ring. PSME1 can form homoheptamers.

Implicated in immunoproteasome assembly and required for efficient antigen processing. The PA28 activator complex enhances the generation of class I binding peptides by altering the cleavage pattern of the proteasome. The polypeptide is Proteasome activator complex subunit 1 (PSME1) (Sus scrofa (Pig)).